Reading from the N-terminus, the 342-residue chain is Holliday junction branch migration complex subunit RuvB (342 aa).

A large ATPase domain (RuvB-L) region spans residues 1 to 181; the sequence is MEERFLTPKD…FGMVLELEFY (181 aa). ATP is bound by residues leucine 20, arginine 21, glycine 62, lysine 65, threonine 66, threonine 67, 128 to 130, arginine 171, tyrosine 181, and arginine 218; that span reads EDF. A Mg(2+)-binding site is contributed by threonine 66. The tract at residues 182–252 is small ATPAse domain (RuvB-S); that stretch reads TPDELKQIIK…TVEDAMKIMG (71 aa). Residues 255 to 342 form a head domain (RuvB-H) region; it reads AEGLDDMDRK…IGPLWDSTGD (88 aa). Residues arginine 310 and arginine 315 each contribute to the DNA site.

The protein belongs to the RuvB family. As to quaternary structure, homohexamer. Forms an RuvA(8)-RuvB(12)-Holliday junction (HJ) complex. HJ DNA is sandwiched between 2 RuvA tetramers; dsDNA enters through RuvA and exits via RuvB. An RuvB hexamer assembles on each DNA strand where it exits the tetramer. Each RuvB hexamer is contacted by two RuvA subunits (via domain III) on 2 adjacent RuvB subunits; this complex drives branch migration. In the full resolvosome a probable DNA-RuvA(4)-RuvB(12)-RuvC(2) complex forms which resolves the HJ.

The protein resides in the cytoplasm. The enzyme catalyses ATP + H2O = ADP + phosphate + H(+). Its function is as follows. The RuvA-RuvB-RuvC complex processes Holliday junction (HJ) DNA during genetic recombination and DNA repair, while the RuvA-RuvB complex plays an important role in the rescue of blocked DNA replication forks via replication fork reversal (RFR). RuvA specifically binds to HJ cruciform DNA, conferring on it an open structure. The RuvB hexamer acts as an ATP-dependent pump, pulling dsDNA into and through the RuvAB complex. RuvB forms 2 homohexamers on either side of HJ DNA bound by 1 or 2 RuvA tetramers; 4 subunits per hexamer contact DNA at a time. Coordinated motions by a converter formed by DNA-disengaged RuvB subunits stimulates ATP hydrolysis and nucleotide exchange. Immobilization of the converter enables RuvB to convert the ATP-contained energy into a lever motion, pulling 2 nucleotides of DNA out of the RuvA tetramer per ATP hydrolyzed, thus driving DNA branch migration. The RuvB motors rotate together with the DNA substrate, which together with the progressing nucleotide cycle form the mechanistic basis for DNA recombination by continuous HJ branch migration. Branch migration allows RuvC to scan DNA until it finds its consensus sequence, where it cleaves and resolves cruciform DNA. The sequence is that of Holliday junction branch migration complex subunit RuvB from Kosmotoga olearia (strain ATCC BAA-1733 / DSM 21960 / TBF 19.5.1).